The primary structure comprises 490 residues: C-type lectin domain family 14 member A (490 aa).

Residues 1–21 (MRPAFALCLLWQALWPGPGGG) form the signal peptide. Residues 22–397 (EHPTADRAGC…TPQAFDSSSA (376 aa)) are Extracellular-facing. Residues 33–173 (ASGACYSLHH…LRANGYLCKY (141 aa)) enclose the C-type lectin domain. Residues cysteine 143 and cysteine 162 are joined by a disulfide bond. A glycan (N-linked (GlcNAc...) asparagine) is linked at asparagine 189. Residues 245 to 287 (PCPGRYLRAGKCAELPNCLDDLGGFACECATGFELGKDGRSCV) form the EGF-like domain. The disordered stretch occupies residues 286–349 (CVTSGEGQPT…VTSIPEIPRW (64 aa)). Positions 301–315 (VPTRRPPATATSPVP) are enriched in low complexity. A glycan (N-linked (GlcNAc...) asparagine) is linked at asparagine 381. Residues 398–418 (VVFIFVSTAVVVLVILTMTVL) form a helical membrane-spanning segment. The Cytoplasmic segment spans residues 419 to 490 (GLVKLCFHES…AESPLGSSDA (72 aa)). The disordered stretch occupies residues 428 to 461 (SPSSQPRKESMGPPGLESDPEPAALGSSSAHCTN).

It localises to the membrane. The sequence is that of C-type lectin domain family 14 member A (CLEC14A) from Homo sapiens (Human).